The sequence spans 212 residues: Probable GTP-binding protein EngB (212 aa).

One can recognise an EngB-type G domain in the interval serine 38–proline 210. Residues glycine 46–serine 53, glycine 73–glutamine 77, aspartate 91–glycine 94, threonine 158–aspartate 161, and valine 189–asparagine 191 each bind GTP. Residues serine 53 and threonine 75 each contribute to the Mg(2+) site.

Belongs to the TRAFAC class TrmE-Era-EngA-EngB-Septin-like GTPase superfamily. EngB GTPase family. The cofactor is Mg(2+).

Its function is as follows. Necessary for normal cell division and for the maintenance of normal septation. This chain is Probable GTP-binding protein EngB, found in Rickettsia peacockii (strain Rustic).